The sequence spans 541 residues: uncharacterized protein (541 aa).

6 consecutive transmembrane segments (helical) span residues 57–77 (LVVTANLLGIGVALLLVTIAI), 90–110 (LTFGVVPGYVLLALALGSYAL), 144–164 (VGHLMFWGVGTALLTTLYGLI), 167–187 (AFIPRFLFAVSFCGVLVATAT), 221–241 (MVVWLLGSGVPVVGIALMAMF), and 257–277 (VLIISMVTLVFGFILMWILAW). One can recognise an HAMP domain in the interval 278-329 (LTATPVRVVRAALRRVERGELRTNLVVFDGTELGELQRGFNAMVAGLRERER). The 125-residue stretch at 361-485 (AVVFIDIVGS…EPVNEAARLC (125 aa)) folds into the Guanylate cyclase domain.

It belongs to the adenylyl cyclase class-3 family.

The protein localises to the cell membrane. This is an uncharacterized protein from Mycobacterium tuberculosis (strain CDC 1551 / Oshkosh).